Reading from the N-terminus, the 270-residue chain is Chymotrypsin-like elastase family member 3A (270 aa).

A signal peptide (or 16) is located at residues 1-15 (MMLRLLSSLLLVAVA). A propeptide spans 16 to 28 (SGYGPPSSHSSSR) (activation peptide). The Peptidase S1 domain occupies 29–268 (VVHGEDAVPY…FIDWIEETIA (240 aa)). An intrachain disulfide couples cysteine 58 to cysteine 74. Histidine 73 (charge relay system) is an active-site residue. A glycan (N-linked (GlcNAc...) asparagine) is linked at asparagine 114. Residues cysteine 117 and cysteine 120 are joined by a disulfide bond. Aspartate 123 serves as the catalytic Charge relay system. 3 disulfides stabilise this stretch: cysteine 157-cysteine 223, cysteine 188-cysteine 204, and cysteine 213-cysteine 244. Serine 217 (charge relay system) is an active-site residue.

Belongs to the peptidase S1 family. Elastase subfamily.

It carries out the reaction Preferential cleavage: Ala-|-Xaa. Does not hydrolyze elastin.. Efficient protease with alanine specificity but only little elastolytic activity. The protein is Chymotrypsin-like elastase family member 3A (CELA3A) of Homo sapiens (Human).